A 674-amino-acid polypeptide reads, in one-letter code: tRNA 5-methylaminomethyl-2-thiouridine biosynthesis bifunctional protein MnmC (674 aa).

The tRNA (mnm(5)s(2)U34)-methyltransferase stretch occupies residues Met-1 to Ala-248. The segment at Ile-276–Arg-674 is FAD-dependent cmnm(5)s(2)U34 oxidoreductase.

This sequence in the N-terminal section; belongs to the methyltransferase superfamily. tRNA (mnm(5)s(2)U34)-methyltransferase family. It in the C-terminal section; belongs to the DAO family. FAD is required as a cofactor.

The protein resides in the cytoplasm. The enzyme catalyses 5-aminomethyl-2-thiouridine(34) in tRNA + S-adenosyl-L-methionine = 5-methylaminomethyl-2-thiouridine(34) in tRNA + S-adenosyl-L-homocysteine + H(+). Catalyzes the last two steps in the biosynthesis of 5-methylaminomethyl-2-thiouridine (mnm(5)s(2)U) at the wobble position (U34) in tRNA. Catalyzes the FAD-dependent demodification of cmnm(5)s(2)U34 to nm(5)s(2)U34, followed by the transfer of a methyl group from S-adenosyl-L-methionine to nm(5)s(2)U34, to form mnm(5)s(2)U34. This chain is tRNA 5-methylaminomethyl-2-thiouridine biosynthesis bifunctional protein MnmC, found in Hydrogenovibrio crunogenus (strain DSM 25203 / XCL-2) (Thiomicrospira crunogena).